Reading from the N-terminus, the 121-residue chain is Small ribosomal subunit protein uS13 (121 aa).

The interval 91–121 (HRMSLPVRGQRTRTNARTRRGSRKTVAGRKK) is disordered. Basic residues predominate over residues 100 to 121 (QRTRTNARTRRGSRKTVAGRKK).

Belongs to the universal ribosomal protein uS13 family. In terms of assembly, part of the 30S ribosomal subunit. Forms a loose heterodimer with protein S19. Forms two bridges to the 50S subunit in the 70S ribosome.

Its function is as follows. Located at the top of the head of the 30S subunit, it contacts several helices of the 16S rRNA. In the 70S ribosome it contacts the 23S rRNA (bridge B1a) and protein L5 of the 50S subunit (bridge B1b), connecting the 2 subunits; these bridges are implicated in subunit movement. Contacts the tRNAs in the A and P-sites. The polypeptide is Small ribosomal subunit protein uS13 (Prochlorococcus marinus (strain MIT 9312)).